A 416-amino-acid chain; its full sequence is Glutamyl-tRNA reductase (416 aa).

Substrate is bound by residues Thr-49–Arg-52, Ser-105, Glu-110–Gln-112, and Gln-116. Catalysis depends on Cys-50, which acts as the Nucleophile. Residue Gly-185 to Ile-190 coordinates NADP(+).

The protein belongs to the glutamyl-tRNA reductase family. In terms of assembly, homodimer.

It catalyses the reaction (S)-4-amino-5-oxopentanoate + tRNA(Glu) + NADP(+) = L-glutamyl-tRNA(Glu) + NADPH + H(+). Its pathway is porphyrin-containing compound metabolism; protoporphyrin-IX biosynthesis; 5-aminolevulinate from L-glutamyl-tRNA(Glu): step 1/2. Catalyzes the NADPH-dependent reduction of glutamyl-tRNA(Glu) to glutamate 1-semialdehyde (GSA). This chain is Glutamyl-tRNA reductase, found in Shewanella piezotolerans (strain WP3 / JCM 13877).